The chain runs to 274 residues: Thymidylate synthase (274 aa).

DUMP is bound at residue Arg-21. A (6R)-5,10-methylene-5,6,7,8-tetrahydrofolate-binding site is contributed by His-51. A dUMP-binding site is contributed by 123–124 (RR). Cys-156 (nucleophile) is an active-site residue. Residues 176–179 (RSAD), Asn-187, and 217–219 (HIY) contribute to the dUMP site. Asp-179 is a binding site for (6R)-5,10-methylene-5,6,7,8-tetrahydrofolate. Residue Ala-273 participates in (6R)-5,10-methylene-5,6,7,8-tetrahydrofolate binding.

It belongs to the thymidylate synthase family. Bacterial-type ThyA subfamily. In terms of assembly, homodimer.

It is found in the cytoplasm. It carries out the reaction dUMP + (6R)-5,10-methylene-5,6,7,8-tetrahydrofolate = 7,8-dihydrofolate + dTMP. Its pathway is pyrimidine metabolism; dTTP biosynthesis. Its function is as follows. Catalyzes the reductive methylation of 2'-deoxyuridine-5'-monophosphate (dUMP) to 2'-deoxythymidine-5'-monophosphate (dTMP) while utilizing 5,10-methylenetetrahydrofolate (mTHF) as the methyl donor and reductant in the reaction, yielding dihydrofolate (DHF) as a by-product. This enzymatic reaction provides an intracellular de novo source of dTMP, an essential precursor for DNA biosynthesis. This is Thymidylate synthase from Christiangramia forsetii (strain DSM 17595 / CGMCC 1.15422 / KT0803) (Gramella forsetii).